The primary structure comprises 346 residues: Nitrilase 1 (346 aa).

The residue at position 2 (serine 2) is an N-acetylserine. One can recognise a CN hydrolase domain in the interval 25-297; it reads VRVTIVQSST…EGLVTADIDL (273 aa). The active-site Proton acceptor is glutamate 65. Lysine 152 acts as the Proton donor in catalysis. The active-site Nucleophile is the cysteine 186.

The protein belongs to the carbon-nitrogen hydrolase superfamily. Nitrilase family. Interacts with DEK3. As to expression, expressed in cotyledons, hypocotyls, leaves, roots, stems, flowers and siliques.

It catalyses the reaction a nitrile + 2 H2O = a carboxylate + NH4(+). Functionally, can convert indole-3-acetonitrile to the plant hormone indole-3-acetic acid. In Arabidopsis thaliana (Mouse-ear cress), this protein is Nitrilase 1.